Consider the following 397-residue polypeptide: Subtilisin-like protease 3 (397 aa).

The N-terminal stretch at 1–19 is a signal peptide; it reads MGCIKVISVFLAAVAAVDA. Residues 20–116 constitute a propeptide that is removed on maturation; sequence RAFFHNRGGN…VEHDRVVKLA (97 aa). The 82-residue stretch at 35 to 116 folds into the Inhibitor I9 domain; sequence SYIVVMKDGV…VEHDRVVKLA (82 aa). Residues 126-397 enclose the Peptidase S8 domain; that stretch reads TWGLGRVSHK…NKLLYNGSGR (272 aa). Catalysis depends on charge relay system residues D158 and H189. N-linked (GlcNAc...) asparagine glycosylation occurs at N250. S344 acts as the Charge relay system in catalysis. N393 is a glycosylation site (N-linked (GlcNAc...) asparagine).

Belongs to the peptidase S8 family.

The protein localises to the secreted. Its function is as follows. Secreted subtilisin-like serine protease with keratinolytic activity that contributes to pathogenicity. The chain is Subtilisin-like protease 3 (SUB3) from Arthroderma otae (strain ATCC MYA-4605 / CBS 113480) (Microsporum canis).